Here is an 805-residue protein sequence, read N- to C-terminus: Angiotensin-converting enzyme 2 (805 aa).

The N-terminal stretch at 1–17 (MSSSSWLLLSLVAVTAA) is a signal peptide. Topologically, residues 18–740 (QSTIEEQAKT…LGPPNQPPVS (723 aa)) are extracellular. Residues 19-607 (STIEEQAKTF…QNKNSFVGWS (589 aa)) form the Peptidase M2 domain. The tract at residues 30-41 (DKFNHEAEDLFY) is interaction with SARS-CoV spike glycoprotein. N-linked (GlcNAc...) asparagine glycosylation occurs at Asn53. The interaction with SARS-CoV spike glycoprotein stretch occupies residues 82–84 (MYP). Residues Asn90 and Asn103 are each glycosylated (N-linked (GlcNAc...) asparagine). A disulfide bridge connects residues Cys133 and Cys141. Residue Arg169 coordinates chloride. Arg273 lines the substrate pocket. The N-linked (GlcNAc...) asparagine glycan is linked to Asn322. The cysteines at positions 344 and 361 are disulfide-linked. 345–346 (HP) contributes to the substrate binding site. The segment at 353–357 (KGDFR) is interaction with SARS-CoV spike glycoprotein. His374 contributes to the Zn(2+) binding site. Residue Glu375 is the Proton acceptor of the active site. Residues His378 and Glu402 each coordinate Zn(2+). Asn432 is a glycosylation site (N-linked (GlcNAc...) asparagine). The chloride site is built by Trp477 and Lys481. Catalysis depends on His505, which acts as the Proton donor. Residue Tyr515 participates in substrate binding. Cys530 and Cys542 are joined by a disulfide. Asn546 is a glycosylation site (N-linked (GlcNAc...) asparagine). The Collectrin-like domain occupies 614-805 (ADQSIKVRIS…QNTDDVQTSF (192 aa)). Positions 652–659 (RQYFLKVK) are essential for cleavage by ADAM17. N-linked (GlcNAc...) asparagine glycosylation is present at Asn690. Residues 697–716 (RTEVEKAIRMSRSRINDAFR) form an essential for cleavage by TMPRSS11D and TMPRSS2 region. Residues 741 to 761 (IWLIVFGVVMGVIVVGIVILI) traverse the membrane as a helical segment. Residues 762–805 (FTGIRDRKKKNKARSGENPYASIDISKGENNPGFQNTDDVQTSF) lie on the Cytoplasmic side of the membrane. Residues 772–805 (NKARSGENPYASIDISKGENNPGFQNTDDVQTSF) form a disordered region. Positions 778–786 (ENPYASIDI) match the LIR motif. Position 781 is a phosphotyrosine (Tyr781). The Endocytic sorting signal motif lies at 781 to 784 (YASI). The SH2-binding motif lies at 781 to 785 (YASID). Phosphoserine is present on Ser783. A Glycyl lysine isopeptide (Lys-Gly) (interchain with G-Cter in ubiquitin) cross-link involves residue Lys788. Positions 789 to 805 (GENNPGFQNTDDVQTSF) are enriched in polar residues. A PTB motif is present at residues 792–795 (NPGF). Positions 803-805 (TSF) match the PDZ-binding motif.

The protein belongs to the peptidase M2 family. In terms of assembly, homodimer. Interacts with the catalytically active form of TMPRSS2. Interacts with SLC6A19; this interaction is essential for expression and function of SLC6A19 in intestine. Interacts with ITGA5:ITGB1. Probably interacts (via endocytic sorting signal motif) with AP2M1; the interaction is inhibited by phosphorylation of Tyr-781. Interacts (via PDZ-binding motif) with NHERF1 (via PDZ domains); the interaction may enhance ACE2 membrane residence. As to quaternary structure, (Microbial infection) Interacts with SARS coronavirus/SARS-CoV spike protein. (Microbial infection) Interacts with SARS coronavirus-2/SARS-CoV-2 spike protein (via RBD domain). In terms of assembly, (Microbial infection) Interacts with human coronavirus NL63 spike protein. As to quaternary structure, (Microbial infection) Interacts with human coronavirus NL63/HCoV-NL63 spike glycoprotein. (Microbial infection) Interacts with SARS coronavirus-2/SARS-CoV-2 spike protein; the interaction is increased by AVP/Arg-vasopressin with which they may form a complex. Zn(2+) serves as cofactor. It depends on chloride as a cofactor. Post-translationally, N-glycosylation on Asn-90 may limit SARS infectivity. Proteolytic cleavage by ADAM17 generates a secreted form. Also cleaved by serine proteases: TMPRSS2, TMPRSS11D and HPN/TMPRSS1. In terms of processing, phosphorylated. Phosphorylation at Tyr-781 probably inhibits interaction with AP2M1 and enables interactions with proteins containing SH2 domains. Post-translationally, ubiquitinated. Ubiquitinated on Lys-788 via 'Lys-48'-linked ubiquitin. 'Lys-48'-linked deubiquitinated by USP50 on the Lys-788; leading to its stabilization. In terms of tissue distribution, expressed in endothelial cells from small and large arteries, and in arterial smooth muscle cells (at protein level). Expressed in enterocytes of the small intestine, Leydig cells and Sertoli cells (at protein level). Expressed in the renal proximal tubule and the small intestine (at protein level). Expressed in heart, kidney, testis, and gastrointestinal system (at protein level). In lung, expressed at low levels in some alveolar type 2 cells, the expression seems to be individual-specific (at protein level). Expressed in nasal epithelial cells (at protein level). Coexpressed with TMPRSS2 within some lung alveolar type 2 cells, ileal absorptive enterocytes, intestinal epithelial cells, cornea, gallbladder and nasal goblet secretory cells. Coexpressed with TMPRSS4 within mature enterocytes. Expressed in nasal and bronchial epithelial cells (at protein level).

It localises to the secreted. It is found in the cell membrane. The protein resides in the cytoplasm. Its subcellular location is the cell projection. The protein localises to the cilium. It localises to the apical cell membrane. It catalyses the reaction angiotensin II + H2O = angiotensin-(1-7) + L-phenylalanine. The enzyme catalyses angiotensin I + H2O = angiotensin-(1-9) + L-leucine. It carries out the reaction bradykinin(1-8) + H2O = bradykinin(1-7) + L-phenylalanine. The catalysed reaction is neurotensin + H2O = neurotensin-(1-12) + L-leucine. It catalyses the reaction neurotensin-(1-8) + H2O = neurotensin-(1-7) + L-arginine. The enzyme catalyses kinetensin + H2O = kinetensin-(1-8) + L-leucine. It carries out the reaction dynorphin A-(1-13) + H2O = dynorphin A-(1-12) + L-lysine. The catalysed reaction is apelin-13 + H2O = apelin-12 + L-phenylalanine. It catalyses the reaction [Pyr1]apelin-13 + H2O = [Pyr1]apelin-12 + L-phenylalanine. The enzyme catalyses apelin-17 + H2O = apelin-16 + L-phenylalanine. It carries out the reaction beta-casomorphin-7 + H2O = beta-casomorphin-6 + L-isoleucine. The catalysed reaction is neocasomorphin + H2O = neocasomorphin-(1-5) + L-isoleucine. With respect to regulation, regulated by chloride and fluoride, but not bromide. Chloride increases angiotensin I and decreases angiotensin II cleavage. Inhibited by MLN-4760, cFP_Leu, and EDTA, but not by the ACE inhibitors lisinopril, captopril and enalaprilat. Highly potent and selective in vitro ACE2 inhibitors were identified. Its function is as follows. Essential counter-regulatory carboxypeptidase of the renin-angiotensin hormone system that is a critical regulator of blood volume, systemic vascular resistance, and thus cardiovascular homeostasis. Converts angiotensin I to angiotensin 1-9, a nine-amino acid peptide with anti-hypertrophic effects in cardiomyocytes, and angiotensin II to angiotensin 1-7, which then acts as a beneficial vasodilator and anti-proliferation agent, counterbalancing the actions of the vasoconstrictor angiotensin II. Also removes the C-terminal residue from three other vasoactive peptides, neurotensin, kinetensin, and des-Arg bradykinin, but is not active on bradykinin. Also cleaves other biological peptides, such as apelins (apelin-13, [Pyr1]apelin-13, apelin-17, apelin-36), casomorphins (beta-casomorphin-7, neocasomorphin) and dynorphin A with high efficiency. In addition, ACE2 C-terminus is homologous to collectrin and is responsible for the trafficking of the neutral amino acid transporter SL6A19 to the plasma membrane of gut epithelial cells via direct interaction, regulating its expression on the cell surface and its catalytic activity. Functionally, (Microbial infection) Acts as a receptor for human coronaviruses SARS-CoV and SARS-CoV-2, as well as human coronavirus NL63/HCoV-NL63. In terms of biological role, non-functional as a carboxypeptidase. (Microbial infection) Non-functional as a receptor for human coronavirus SARS-CoV-2. This chain is Angiotensin-converting enzyme 2, found in Homo sapiens (Human).